A 342-amino-acid polypeptide reads, in one-letter code: Probable dual-specificity RNA methyltransferase RlmN (342 aa).

E91 functions as the Proton acceptor in the catalytic mechanism. The 231-residue stretch at Y97–D327 folds into the Radical SAM core domain. The cysteines at positions 104 and 332 are disulfide-linked. The [4Fe-4S] cluster site is built by C111, C115, and C118. Residues G158–E159, S190, S213–H215, and N289 contribute to the S-adenosyl-L-methionine site. Catalysis depends on C332, which acts as the S-methylcysteine intermediate.

The protein belongs to the radical SAM superfamily. RlmN family. [4Fe-4S] cluster is required as a cofactor.

The protein resides in the cytoplasm. The enzyme catalyses adenosine(2503) in 23S rRNA + 2 reduced [2Fe-2S]-[ferredoxin] + 2 S-adenosyl-L-methionine = 2-methyladenosine(2503) in 23S rRNA + 5'-deoxyadenosine + L-methionine + 2 oxidized [2Fe-2S]-[ferredoxin] + S-adenosyl-L-homocysteine. It carries out the reaction adenosine(37) in tRNA + 2 reduced [2Fe-2S]-[ferredoxin] + 2 S-adenosyl-L-methionine = 2-methyladenosine(37) in tRNA + 5'-deoxyadenosine + L-methionine + 2 oxidized [2Fe-2S]-[ferredoxin] + S-adenosyl-L-homocysteine. Specifically methylates position 2 of adenine 2503 in 23S rRNA and position 2 of adenine 37 in tRNAs. The chain is Probable dual-specificity RNA methyltransferase RlmN from Clostridium botulinum (strain Loch Maree / Type A3).